The chain runs to 322 residues: ATP-dependent 6-phosphofructokinase (322 aa).

Gly-11 is a binding site for ATP. An ADP-binding site is contributed by 21–25 (RAVAR). ATP contacts are provided by residues 72 to 73 (RY) and 102 to 105 (GDGS). Asp-103 is a binding site for Mg(2+). Residue 125–127 (TID) coordinates substrate. Catalysis depends on Asp-127, which acts as the Proton acceptor. An ADP-binding site is contributed by Arg-154. Residues Arg-162 and 169–171 (MGR) each bind substrate. ADP contacts are provided by residues 185 to 187 (GAD) and 213 to 215 (KDY). Substrate-binding positions include Glu-222, Arg-246, and 252–255 (HVQR).

It belongs to the phosphofructokinase type A (PFKA) family. ATP-dependent PFK group I subfamily. Prokaryotic clade 'B1' sub-subfamily. As to quaternary structure, homotetramer. Mg(2+) serves as cofactor.

The protein localises to the cytoplasm. It catalyses the reaction beta-D-fructose 6-phosphate + ATP = beta-D-fructose 1,6-bisphosphate + ADP + H(+). Its pathway is carbohydrate degradation; glycolysis; D-glyceraldehyde 3-phosphate and glycerone phosphate from D-glucose: step 3/4. Its activity is regulated as follows. Allosterically activated by ADP and other diphosphonucleosides, and allosterically inhibited by phosphoenolpyruvate. In terms of biological role, catalyzes the phosphorylation of D-fructose 6-phosphate to fructose 1,6-bisphosphate by ATP, the first committing step of glycolysis. This Pediococcus pentosaceus (strain ATCC 25745 / CCUG 21536 / LMG 10740 / 183-1w) protein is ATP-dependent 6-phosphofructokinase.